A 754-amino-acid chain; its full sequence is ATP-dependent zinc metalloprotease FtsH (754 aa).

Topologically, residues 1 to 9 are cytoplasmic; sequence MKQRMKKPS. A helical transmembrane segment spans residues 10–30; it reads LGTFILILILIGILAYVLWQF. At 31–186 the chain is on the extracellular side; it reads LSPKLGYKSL…FDRPRGNFLS (156 aa). Residues 187–207 traverse the membrane as a helical segment; it reads SFIVPYIPFLLISLFGFWLFF. The Cytoplasmic segment spans residues 208-754; it reads RLSQNSQAGG…ESKIDSSKEQ (547 aa). 277–284 serves as a coordination point for ATP; the sequence is GPPGTGKT. Position 499 (histidine 499) interacts with Zn(2+). Glutamate 500 is an active-site residue. Residues histidine 503 and aspartate 577 each contribute to the Zn(2+) site. A disordered region spans residues 713–754; sequence QEKSYENEDQNQNSLEAINYNIDDQDDDKNDSESKIDSSKEQ. Residues 743-754 are compositionally biased toward basic and acidic residues; it reads DSESKIDSSKEQ.

It in the central section; belongs to the AAA ATPase family. This sequence in the C-terminal section; belongs to the peptidase M41 family. In terms of assembly, homohexamer. Zn(2+) is required as a cofactor.

The protein localises to the cell membrane. Its function is as follows. Acts as a processive, ATP-dependent zinc metallopeptidase for both cytoplasmic and membrane proteins. Plays a role in the quality control of integral membrane proteins. This is ATP-dependent zinc metalloprotease FtsH from Mesomycoplasma conjunctivae (strain ATCC 25834 / NCTC 10147 / HRC/581) (Mycoplasma conjunctivae).